Consider the following 252-residue polypeptide: Short-chain dehydrogenase anuI (252 aa).

Positions 18, 65, 92, 171, 175, and 206 each coordinate NADP(+). Catalysis depends on Tyr171, which acts as the Proton acceptor. Tyr171 (proton donor) is an active-site residue. Lys175 (lowers pKa of active site Tyr) is an active-site residue.

It belongs to the short-chain dehydrogenases/reductases (SDR) family.

In terms of biological role, highly reducing polyketide synthase; part of the gene cluster that mediates the biosynthesis of annullatin D, an alkylated aromatic polyketide with a fused dihydrobenzofuran lactone ring system that exhibits potent agonistic activities toward the cannabinoid receptors. AnuI does not seem to play a role within the pathway. The annullatin backbone 2-hydroxymethyl-3-pentylphenol is assembled from one acetyl-CoA starter unit and 5 malonyl-CoA elongation units by cooperation of the highly reducing polyketide synthase anuA, the short-chain dehydrogenase anuB and the oxidoreductase anuC, before being hydroxylated at the C-5 alkyl chain by the cytochrome P450 monooxygenase anuE to form (8S)-annullatin E. The prenyltransferase anuH subsequently installs one isoprenyl group at the benzene ring to form (8S)-annullatin J. Enzymatic or nonenzymatic dihydro-benzofuran ring formation between the prenyl and the phenolic hydroxyl groups in (8S)-annullatin J results in two diastereomers (2S,9S)-annullatin H and compound 12. The intermediate (2S,9S)-annullatin H is then converted to (2S,9S)-annullatin D by the FAD-linked oxidoreductase anuG-catalyzed five-member lactone ring formation. The isomer 12 acts as a substrate for the short-chain dehydrogenase anuF and is oxidized to (2R)-annullatin F, which is subsequently acetylated by an acetyltransferase leading to (2R)-annullatin G formation. The remaining enzymes identified within the cluster, anuD, anuI and anuJ, seem not to be involved in annullatin biosynthesis. This Penicillium roqueforti (strain FM164) protein is Short-chain dehydrogenase anuI.